A 570-amino-acid chain; its full sequence is Protein misato homolog 1 (570 aa).

Ser495 bears the Phosphoserine mark.

The protein belongs to the misato family.

It localises to the mitochondrion outer membrane. The protein localises to the cytoplasm. Its function is as follows. Involved in the regulation of mitochondrial distribution and morphology. Required for mitochondrial fusion and mitochondrial network formation. This Pongo pygmaeus (Bornean orangutan) protein is Protein misato homolog 1 (MSTO1).